Consider the following 302-residue polypeptide: Nucleotide-binding protein Bcenmc03_2806 (302 aa).

Residue 8 to 15 coordinates ATP; the sequence is GISGSGKS. 57 to 60 is a binding site for GTP; it reads DARS.

The protein belongs to the RapZ-like family.

Displays ATPase and GTPase activities. This chain is Nucleotide-binding protein Bcenmc03_2806, found in Burkholderia orbicola (strain MC0-3).